Consider the following 348-residue polypeptide: UDP-rhamnose/UDP-galactose transporter 2 (348 aa).

Transmembrane regions (helical) follow at residues A12 to A32, F44 to V64, L81 to L101, V104 to V124, E133 to V153, F160 to L180, A196 to G216, L230 to I250, S257 to F277, and I286 to E306.

It belongs to the TPT transporter family. TPT (TC 2.A.7.9) subfamily.

It is found in the golgi apparatus membrane. Its function is as follows. Nucleotide-sugar transporter that transports UDP-rhamnose or UDP-galactose and UMP in a strict counter-exchange mode. This is UDP-rhamnose/UDP-galactose transporter 2 from Arabidopsis thaliana (Mouse-ear cress).